Reading from the N-terminus, the 458-residue chain is ATP synthase subunit beta (458 aa).

Position 148-155 (148-155 (GGAGVGKT)) interacts with ATP.

The protein belongs to the ATPase alpha/beta chains family. In terms of assembly, F-type ATPases have 2 components, CF(1) - the catalytic core - and CF(0) - the membrane proton channel. CF(1) has five subunits: alpha(3), beta(3), gamma(1), delta(1), epsilon(1). CF(0) has three main subunits: a(1), b(2) and c(9-12). The alpha and beta chains form an alternating ring which encloses part of the gamma chain. CF(1) is attached to CF(0) by a central stalk formed by the gamma and epsilon chains, while a peripheral stalk is formed by the delta and b chains.

The protein localises to the cell inner membrane. The enzyme catalyses ATP + H2O + 4 H(+)(in) = ADP + phosphate + 5 H(+)(out). Its function is as follows. Produces ATP from ADP in the presence of a proton gradient across the membrane. The catalytic sites are hosted primarily by the beta subunits. This is ATP synthase subunit beta from Laribacter hongkongensis (strain HLHK9).